The following is a 313-amino-acid chain: 4-hydroxy-3-methylbut-2-enyl diphosphate reductase (313 aa).

Cysteine 12 is a [4Fe-4S] cluster binding site. Positions 41 and 74 each coordinate (2E)-4-hydroxy-3-methylbut-2-enyl diphosphate. Residues histidine 41 and histidine 74 each coordinate dimethylallyl diphosphate. Isopentenyl diphosphate is bound by residues histidine 41 and histidine 74. Cysteine 96 provides a ligand contact to [4Fe-4S] cluster. (2E)-4-hydroxy-3-methylbut-2-enyl diphosphate is bound at residue histidine 124. Histidine 124 serves as a coordination point for dimethylallyl diphosphate. Histidine 124 contacts isopentenyl diphosphate. Catalysis depends on glutamate 126, which acts as the Proton donor. Threonine 167 contacts (2E)-4-hydroxy-3-methylbut-2-enyl diphosphate. Cysteine 197 lines the [4Fe-4S] cluster pocket. The (2E)-4-hydroxy-3-methylbut-2-enyl diphosphate site is built by serine 225, serine 226, asparagine 227, and serine 269. 4 residues coordinate dimethylallyl diphosphate: serine 225, serine 226, asparagine 227, and serine 269. 4 residues coordinate isopentenyl diphosphate: serine 225, serine 226, asparagine 227, and serine 269.

This sequence belongs to the IspH family. [4Fe-4S] cluster is required as a cofactor.

It catalyses the reaction isopentenyl diphosphate + 2 oxidized [2Fe-2S]-[ferredoxin] + H2O = (2E)-4-hydroxy-3-methylbut-2-enyl diphosphate + 2 reduced [2Fe-2S]-[ferredoxin] + 2 H(+). The catalysed reaction is dimethylallyl diphosphate + 2 oxidized [2Fe-2S]-[ferredoxin] + H2O = (2E)-4-hydroxy-3-methylbut-2-enyl diphosphate + 2 reduced [2Fe-2S]-[ferredoxin] + 2 H(+). It functions in the pathway isoprenoid biosynthesis; dimethylallyl diphosphate biosynthesis; dimethylallyl diphosphate from (2E)-4-hydroxy-3-methylbutenyl diphosphate: step 1/1. The protein operates within isoprenoid biosynthesis; isopentenyl diphosphate biosynthesis via DXP pathway; isopentenyl diphosphate from 1-deoxy-D-xylulose 5-phosphate: step 6/6. Its function is as follows. Catalyzes the conversion of 1-hydroxy-2-methyl-2-(E)-butenyl 4-diphosphate (HMBPP) into a mixture of isopentenyl diphosphate (IPP) and dimethylallyl diphosphate (DMAPP). Acts in the terminal step of the DOXP/MEP pathway for isoprenoid precursor biosynthesis. This Baumannia cicadellinicola subsp. Homalodisca coagulata protein is 4-hydroxy-3-methylbut-2-enyl diphosphate reductase.